We begin with the raw amino-acid sequence, 216 residues long: Uracil phosphoribosyltransferase (216 aa).

Residues R32, R41, 75 to 78, and K77 contribute to the GTP site; that span reads LGKI. 5-phospho-alpha-D-ribose 1-diphosphate is bound at residue R85. R102 is a binding site for GTP. Residue R110 coordinates 5-phospho-alpha-D-ribose 1-diphosphate. A GTP-binding site is contributed by R131. 5-phospho-alpha-D-ribose 1-diphosphate-binding positions include D137 and 137–145; that span reads DPMLATGGS. D-ribose 5-phosphate is bound at residue Y201. Uracil is bound by residues L202 and 207-209; that span reads GDF. D208 lines the 5-phospho-alpha-D-ribose 1-diphosphate pocket.

Belongs to the UPRTase family. The cofactor is Mg(2+).

It catalyses the reaction UMP + diphosphate = 5-phospho-alpha-D-ribose 1-diphosphate + uracil. It functions in the pathway pyrimidine metabolism; UMP biosynthesis via salvage pathway; UMP from uracil: step 1/1. Allosterically activated by GTP. In terms of biological role, catalyzes the conversion of uracil and 5-phospho-alpha-D-ribose 1-diphosphate (PRPP) to UMP and diphosphate. This is Uracil phosphoribosyltransferase (FUR1) from Lachancea kluyveri (Yeast).